Consider the following 377-residue polypeptide: Acetylornithine aminotransferase (377 aa).

Residues 94–95 (GT) and phenylalanine 121 contribute to the pyridoxal 5'-phosphate site. Arginine 124 lines the N(2)-acetyl-L-ornithine pocket. 206–209 (DEIQ) is a pyridoxal 5'-phosphate binding site. The residue at position 235 (lysine 235) is an N6-(pyridoxal phosphate)lysine. Serine 263 lines the N(2)-acetyl-L-ornithine pocket. Residue threonine 264 participates in pyridoxal 5'-phosphate binding.

The protein belongs to the class-III pyridoxal-phosphate-dependent aminotransferase family. ArgD subfamily. As to quaternary structure, homodimer. Pyridoxal 5'-phosphate serves as cofactor.

Its subcellular location is the cytoplasm. It catalyses the reaction N(2)-acetyl-L-ornithine + 2-oxoglutarate = N-acetyl-L-glutamate 5-semialdehyde + L-glutamate. It participates in amino-acid biosynthesis; L-arginine biosynthesis; N(2)-acetyl-L-ornithine from L-glutamate: step 4/4. This Lactococcus lactis subsp. lactis (strain IL1403) (Streptococcus lactis) protein is Acetylornithine aminotransferase.